A 262-amino-acid chain; its full sequence is Phosphatidylglycerol--prolipoprotein diacylglyceryl transferase (262 aa).

The next 4 helical transmembrane spans lie at 9-29, 41-61, 80-100, and 109-129; these read LGPL…ILAV, IIPD…ILGA, IFAI…GALV, and LINT…AQSL. A 1,2-diacyl-sn-glycero-3-phospho-(1'-sn-glycerol) is bound at residue arginine 131. 3 consecutive transmembrane segments (helical) span residues 167–187, 197–217, and 226–246; these read QPTF…ILIF, GHIT…IEGM, and GLRV…MIVI.

This sequence belongs to the Lgt family.

Its subcellular location is the cell membrane. It catalyses the reaction L-cysteinyl-[prolipoprotein] + a 1,2-diacyl-sn-glycero-3-phospho-(1'-sn-glycerol) = an S-1,2-diacyl-sn-glyceryl-L-cysteinyl-[prolipoprotein] + sn-glycerol 1-phosphate + H(+). It functions in the pathway protein modification; lipoprotein biosynthesis (diacylglyceryl transfer). Its function is as follows. Catalyzes the transfer of the diacylglyceryl group from phosphatidylglycerol to the sulfhydryl group of the N-terminal cysteine of a prolipoprotein, the first step in the formation of mature lipoproteins. The sequence is that of Phosphatidylglycerol--prolipoprotein diacylglyceryl transferase from Streptococcus pneumoniae (strain Taiwan19F-14).